Reading from the N-terminus, the 264-residue chain is uncharacterized protein (264 aa).

A helical transmembrane segment spans residues 7 to 27; it reads LTLGICLVLLIILIVGYVIMT.

Belongs to the staphylococcal tandem lipoprotein family.

It localises to the cell membrane. This is an uncharacterized protein from Staphylococcus aureus (strain MW2).